The following is a 179-amino-acid chain: MAEYGREPCPFRIVEDCGGAFAMGALGGGAFQAIKGFRNAPSGLGYRLSGGLAAVRARSGLVGGNFAVWGATFSAIDCSLVYFRKKEDPWNAIISGATTGGILAARTGLTSMLSSALVGGALLALIEGVGIVVSHYSADSYRQVSPVERQQRYKQELLRQQKGVSPLAATYGEIDSSAL.

3 helical membrane-spanning segments follow: residues 17–37 (CGGA…IKGF), 61–81 (LVGG…CSLV), and 113–133 (LSSA…GIVV).

This sequence belongs to the Tim17/Tim22/Tim23 family. In terms of assembly, component of the TIM23 complex at least composed of Tim23, Tim17 (Tim17a1, Tim17a2 or Tim17b1) and a Tim50. The complex interacts with the Tim44 component of the PAM complex.

It localises to the mitochondrion inner membrane. Essential component of the TIM23 complex, a complex that mediates the translocation of transit peptide-containing proteins across the mitochondrial inner membrane. The polypeptide is Probable mitochondrial import inner membrane translocase subunit Tim17 1 (Tim17b1) (Drosophila melanogaster (Fruit fly)).